The sequence spans 226 residues: Prolactin (226 aa).

A signal peptide spans 1–29 (MNSQGSAQKAGTLLLLLISNLLFCQNVQP). The cysteines at positions 33 and 38 are disulfide-linked. Serine 53 and serine 117 each carry phosphoserine. 2 disulfide bridges follow: cysteine 85-cysteine 201 and cysteine 218-cysteine 226.

It belongs to the somatotropin/prolactin family. Interacts with PRLR.

The protein resides in the secreted. In terms of biological role, prolactin acts primarily on the mammary gland by promoting lactation. This is Prolactin (Prl) from Mus musculus (Mouse).